Consider the following 375-residue polypeptide: Growth/differentiation factor 8 (375 aa).

The first 23 residues, 1-23 (MQKLQIFVYIYLFMLLVAGPVDL), serve as a signal peptide directing secretion. A propeptide spanning residues 24–266 (NENSEQKENV…VTDTPKRSRR (243 aa)) is cleaved from the precursor. N-linked (GlcNAc...) asparagine glycans are attached at residues asparagine 48 and asparagine 71. Intrachain disulfides connect cysteine 272-cysteine 282, cysteine 281-cysteine 340, cysteine 309-cysteine 372, and cysteine 313-cysteine 374.

It belongs to the TGF-beta family. In terms of assembly, homodimer; disulfide-linked. Interacts with WFIKKN2, leading to inhibit its activity. Interacts with FSTL3. Synthesized as large precursor molecule that undergoes proteolytic cleavage to generate an N-terminal propeptide and a disulfide linked C-terminal dimer, which is the biologically active molecule. The circulating form consists of a latent complex of the C-terminal dimer and other proteins, including its propeptide, which maintain the C-terminal dimer in a latent, inactive state. Ligand activation requires additional cleavage of the prodomain by a tolloid-like metalloproteinase.

It is found in the secreted. In terms of biological role, acts specifically as a negative regulator of skeletal muscle growth. This chain is Growth/differentiation factor 8 (MSTN), found in Ovis aries (Sheep).